Reading from the N-terminus, the 34-residue chain is Photosystem II reaction center protein Psb30 (34 aa).

Residues 5–25 traverse the membrane as a helical segment; sequence VLFQLTALIFVVAAGPLVIVL.

The protein belongs to the Psb30/Ycf12 family. As to quaternary structure, PSII is composed of 1 copy each of membrane proteins PsbA, PsbB, PsbC, PsbD, PsbE, PsbF, PsbH, PsbI, PsbJ, PsbK, PsbL, PsbM, PsbT, PsbX, PsbY, PsbZ, Psb30/Ycf12, peripheral proteins of the oxygen-evolving complex and a large number of cofactors. It forms dimeric complexes.

Its subcellular location is the plastid. The protein localises to the chloroplast thylakoid membrane. Its function is as follows. A core subunit of photosystem II (PSII), probably helps stabilize the reaction center. The polypeptide is Photosystem II reaction center protein Psb30 (Tupiella akineta (Green alga)).